Here is a 438-residue protein sequence, read N- to C-terminus: L-cysteine:1D-myo-inositol 2-amino-2-deoxy-alpha-D-glucopyranoside ligase (438 aa).

The segment at 1–27 (MKSWSSRPVPELPGTGTAPRVHDTSTG) is disordered. A Zn(2+)-binding site is contributed by Cys-44. Residues 44-47 (CGIT), Thr-59, and 82-84 (NVT) each bind L-cysteinyl-5'-AMP. The short motif at 46 to 56 (ITPYDATHMGH) is the 'HIGH' region element. The 'ERGGDP' region signature appears at 208 to 213 (DHGGDP). Trp-249 contacts L-cysteinyl-5'-AMP. Cys-253 provides a ligand contact to Zn(2+). 271–273 (GSD) provides a ligand contact to L-cysteinyl-5'-AMP. His-278 contributes to the Zn(2+) binding site. Residue Val-304 coordinates L-cysteinyl-5'-AMP. The 'KMSKS' region motif lies at 310 to 314 (KMSKS).

The protein belongs to the class-I aminoacyl-tRNA synthetase family. MshC subfamily. Monomer. Zn(2+) serves as cofactor.

It catalyses the reaction 1D-myo-inositol 2-amino-2-deoxy-alpha-D-glucopyranoside + L-cysteine + ATP = 1D-myo-inositol 2-(L-cysteinylamino)-2-deoxy-alpha-D-glucopyranoside + AMP + diphosphate + H(+). Catalyzes the ATP-dependent condensation of GlcN-Ins and L-cysteine to form L-Cys-GlcN-Ins. The chain is L-cysteine:1D-myo-inositol 2-amino-2-deoxy-alpha-D-glucopyranoside ligase from Kocuria rhizophila (strain ATCC 9341 / DSM 348 / NBRC 103217 / DC2201).